A 296-amino-acid chain; its full sequence is 3-methyl-2-oxobutanoate hydroxymethyltransferase (296 aa).

Low complexity predominate over residues 1–14 (MTAPTPTPANAATP). The tract at residues 1 to 29 (MTAPTPTPANAATPYGTLPPASPLPQRRP) is disordered. Mg(2+)-binding residues include Asp71 and Asp114. 3-methyl-2-oxobutanoate-binding positions include 71 to 72 (DS), Asp114, and Lys143. Residue Glu145 coordinates Mg(2+). Residue Glu212 is the Proton acceptor of the active site.

The protein belongs to the PanB family. Homodecamer; pentamer of dimers. Mg(2+) is required as a cofactor.

It is found in the cytoplasm. The enzyme catalyses 3-methyl-2-oxobutanoate + (6R)-5,10-methylene-5,6,7,8-tetrahydrofolate + H2O = 2-dehydropantoate + (6S)-5,6,7,8-tetrahydrofolate. Its pathway is cofactor biosynthesis; (R)-pantothenate biosynthesis; (R)-pantoate from 3-methyl-2-oxobutanoate: step 1/2. Catalyzes the reversible reaction in which hydroxymethyl group from 5,10-methylenetetrahydrofolate is transferred onto alpha-ketoisovalerate to form ketopantoate. This Paracidovorax citrulli (strain AAC00-1) (Acidovorax citrulli) protein is 3-methyl-2-oxobutanoate hydroxymethyltransferase.